A 168-amino-acid chain; its full sequence is uncharacterized protein (168 aa).

A helical membrane pass occupies residues 24–44; sequence FIGIVLFLAVLIIGILILILF. 2 disordered regions span residues 69–92 and 142–168; these read SPSS…NNSN and NNNN…TKNI. The span at 142-157 shows a compositional bias: low complexity; that stretch reads NNNNNNNNNPPTNISN.

Its subcellular location is the membrane. This is an uncharacterized protein from Dictyostelium discoideum (Social amoeba).